Consider the following 304-residue polypeptide: Aspartate carbamoyltransferase catalytic subunit (304 aa).

Arg-56 and Thr-57 together coordinate carbamoyl phosphate. Residue Lys-85 participates in L-aspartate binding. Residues Arg-106, His-134, and Gln-137 each coordinate carbamoyl phosphate. L-aspartate contacts are provided by Arg-167 and Arg-226. Carbamoyl phosphate contacts are provided by Leu-265 and Pro-266.

This sequence belongs to the aspartate/ornithine carbamoyltransferase superfamily. ATCase family. Heterooligomer of catalytic and regulatory chains.

The catalysed reaction is carbamoyl phosphate + L-aspartate = N-carbamoyl-L-aspartate + phosphate + H(+). The protein operates within pyrimidine metabolism; UMP biosynthesis via de novo pathway; (S)-dihydroorotate from bicarbonate: step 2/3. Catalyzes the condensation of carbamoyl phosphate and aspartate to form carbamoyl aspartate and inorganic phosphate, the committed step in the de novo pyrimidine nucleotide biosynthesis pathway. In Picrophilus torridus (strain ATCC 700027 / DSM 9790 / JCM 10055 / NBRC 100828 / KAW 2/3), this protein is Aspartate carbamoyltransferase catalytic subunit.